The primary structure comprises 398 residues: ATP-dependent RNA helicase eIF4A (398 aa).

A Q motif motif is present at residues 25 to 53 (DSFDSMDLKPELLRGIYAYGFERPSAIQQ). The region spanning 56-226 (IMPIIKGSDV…TKFMRDPVRI (171 aa)) is the Helicase ATP-binding domain. ATP is bound at residue 69–76 (AQSGTGKT). The DEAD box signature appears at 174–177 (DEAD). A Helicase C-terminal domain is found at 237–398 (GIKQFYIAVE…EMPMNVADLI (162 aa)).

The protein belongs to the DEAD box helicase family. eIF4A subfamily. In terms of assembly, component of the eIF4F complex, which composition varies with external and internal environmental conditions. It is composed of at least eIF4A, eIF4E and eIF4G.

The protein localises to the cytoplasm. The catalysed reaction is ATP + H2O = ADP + phosphate + H(+). Its function is as follows. ATP-dependent RNA helicase which is a subunit of the eIF4F complex involved in cap recognition and is required for mRNA binding to ribosome. In the current model of translation initiation, eIF4A unwinds RNA secondary structures in the 5'-UTR of mRNAs which is necessary to allow efficient binding of the small ribosomal subunit, and subsequent scanning for the initiator codon. This is ATP-dependent RNA helicase eIF4A (tif1) from Aspergillus clavatus (strain ATCC 1007 / CBS 513.65 / DSM 816 / NCTC 3887 / NRRL 1 / QM 1276 / 107).